Here is a 126-residue protein sequence, read N- to C-terminus: Putative phosphotransferase enzyme IIB component UU178 (126 aa).

The helical transmembrane segment at 11 to 31 (LIIFLGIITFGIFIIYFFTKA) threads the bilayer. The PTS EIIB type-1 domain occupies 49–126 (PFSLNDFYNC…KELIKKDLFS (78 aa)).

The protein to M.genitalium MG129 and M.pneumoniae MPN268.

It localises to the membrane. The phosphoenolpyruvate-dependent sugar phosphotransferase system (PTS), a major carbohydrate active -transport system, catalyzes the phosphorylation of incoming sugar substrates concomitant with their translocation across the cell membrane. The protein is Putative phosphotransferase enzyme IIB component UU178 of Ureaplasma parvum serovar 3 (strain ATCC 700970).